The sequence spans 272 residues: Transcription factor GAL1 (272 aa).

The span at 1-10 (MAGKNMSSRL) shows a compositional bias: polar residues. Disordered stretches follow at residues 1 to 49 (MAGK…SPET), 102 to 215 (YGAI…SRDI), and 246 to 272 (KGHL…AMDY). Composition is skewed to acidic residues over residues 113–122 (ESDDDQDEEQ) and 152–174 (SEQD…DEAE). Basic and acidic residues predominate over residues 175–215 (LLIKAERKEAAAKLRAERKAQRKADEVKSKQMAERRRSRDI). The CCHC-type zinc finger occupies 240 to 255 (CHVCGQKGHLQKDCPD).

It localises to the nucleus. Transcription factor; part of the gene cluster that mediates the biosynthesis of liamocins, glycolipids (also called heavy oils) composed of a single mannitol or arabitol headgroup linked to either three, four or even six 3,5-dihydroxydecanoic ester tail-groups. Positively regulates the expression of PKS1 and EST1 that mediate the biosynthesis of liamocins. The protein is Transcription factor GAL1 of Aureobasidium melanogenum (Aureobasidium pullulans var. melanogenum).